Reading from the N-terminus, the 165-residue chain is Putative TRAP transporter small permease protein HI_0051 (165 aa).

4 helical membrane passes run 20 to 40 (LEYL…FNSV), 51 to 71 (FSEE…IILV), 94 to 114 (IVLI…AYGA), and 136 to 156 (LYLA…FSMI).

The protein belongs to the TRAP transporter small permease family.

It is found in the cell inner membrane. This Haemophilus influenzae (strain ATCC 51907 / DSM 11121 / KW20 / Rd) protein is Putative TRAP transporter small permease protein HI_0051.